Reading from the N-terminus, the 117-residue chain is Large ribosomal subunit protein uL18 (117 aa).

It belongs to the universal ribosomal protein uL18 family. As to quaternary structure, part of the 50S ribosomal subunit; part of the 5S rRNA/L5/L18/L25 subcomplex. Contacts the 5S and 23S rRNAs.

In terms of biological role, this is one of the proteins that bind and probably mediate the attachment of the 5S RNA into the large ribosomal subunit, where it forms part of the central protuberance. This is Large ribosomal subunit protein uL18 from Tolumonas auensis (strain DSM 9187 / NBRC 110442 / TA 4).